Consider the following 155-residue polypeptide: uncharacterized protein (155 aa).

One can recognise an N-acetyltransferase domain in the interval Thr6–Leu155.

Belongs to the acetyltransferase family.

This is an uncharacterized protein from Chlorobaculum tepidum (strain ATCC 49652 / DSM 12025 / NBRC 103806 / TLS) (Chlorobium tepidum).